The following is a 365-amino-acid chain: tRNA N6-adenosine threonylcarbamoyltransferase (365 aa).

Residues histidine 119 and histidine 123 each contribute to the Fe cation site. Substrate is bound by residues leucine 141–glycine 145, aspartate 174, glycine 187, and asparagine 288. Residue aspartate 316 coordinates Fe cation.

It belongs to the KAE1 / TsaD family. The cofactor is Fe(2+).

Its subcellular location is the cytoplasm. It catalyses the reaction L-threonylcarbamoyladenylate + adenosine(37) in tRNA = N(6)-L-threonylcarbamoyladenosine(37) in tRNA + AMP + H(+). In terms of biological role, required for the formation of a threonylcarbamoyl group on adenosine at position 37 (t(6)A37) in tRNAs that read codons beginning with adenine. Is involved in the transfer of the threonylcarbamoyl moiety of threonylcarbamoyl-AMP (TC-AMP) to the N6 group of A37, together with TsaE and TsaB. TsaD likely plays a direct catalytic role in this reaction. The chain is tRNA N6-adenosine threonylcarbamoyltransferase from Agrobacterium fabrum (strain C58 / ATCC 33970) (Agrobacterium tumefaciens (strain C58)).